The primary structure comprises 398 residues: Streptopain (398 aa).

Residues 1-27 (MNKKKLGVRLLSLLALGGFVLANPVFA) form the signal peptide. The propeptide occupies 28-145 (DQNFARNEKE…TTYAGTAEIK (118 aa)). Residue Cys192 is the Nucleophile of the active site. Cys192 bears the Cysteine methyl disulfide; in zymogen form mark. 2 residues coordinate a protein: Ser282 and Gly339. The active-site Proton acceptor is His340. The C-terminal active site loop stretch occupies residues 368-390 (RLDALNPSALGTGGGAGGFNGYQ).

The protein belongs to the peptidase C10 family. In terms of assembly, monomer. The mature protease is derived from the precursor sequence by cleavage, either in cis via an autocatalytic mechanism, or in trans by mature SpeB or host proteases (trypsin, plasmin or subtilisin). Maturation can involve a number of protein cleavage intermediates. Mature SpeB probably plays the most important role in protein maturation in physiological conditions. Post-translationally, methylthiolation at Cys-192 of the inactive zymogen form is probably involved in the mechanism of secretion of the proteinase into the culture fluid.

It localises to the secreted. It is found in the host extracellular space. Its subcellular location is the host cytoplasm. The enzyme catalyses Preferential cleavage with hydrophobic residues at P2, P1 and P1'.. With respect to regulation, synthesized as an inactive zymogen to protect the intracellular components of the bacteria from proteolytic activity during protein production. Once secreted into the extracellular milieu, cleaved into the active protease: maturation can be mediated in cis by autocatalytic cleavage, or in trans by mature SpeB or host proteases. Protease activity is strongly inhibited by zinc and copper, which prevent its maturation into an active protease: inhibition by metal ions may be required to prevent proteolysis of streptococcal proteins. Cysteine protease that acts as a key streptococcal virulence factor by cleaving host proteins involved in immune response. Triggers inflammation by mediating cleavage of host proteins, which can both promote host pathogenesis by triggering sterile inflammation and/or restrict streptococcal infection, depending on host immune statue and infection site. Cleaves host gasdermin-A (GSDMA) in epithelial cells, promoting GSDMA activation and formation of gasdermin pores, triggering pyroptosis. Pyroptosis triggers the elimination of the infected skin cell, depriving the pathogen of its protective niche, while inducing an inflammatory response. This ultimately prevents bacterial penetration of the epithelial barrier and a subsequent systemic dissemination of the pathogen. Also mediates cleavage of the cytokine precursor interleukin-1 beta (IL1B) to its mature form, resulting in inflammation and septic shock. SpeB-mediated maturation of IL1B plays a dual role depending on infection site: while IL1B inflammatory response prevents bacterial growth during invasive skin infections, it promotes streptococcal infection of the nasopharynx by disrupting colonization resistance mediated by the microbiota. Inhibits host autophagy be catalyzing cleavage and inactivation of key autophagy factors, such as CALCOCO2, NBR1 and SQSTM1. Cleaves and inhibits a number of complement factors, such as C2, C3-beta chain of C3, C4, C5 or SERPING1, thereby promoting evasion of host immunity. May also impair adaptive immunity by catalyzing cleavage and degradation of host immunoglobulins to promote immune system evasion; the relevance of this activity is however unsure in vivo. Catalyzes maturation and release of the peptide hormone bradykinin from the precursor Kininogen-1 (KNG1) to produce hypotension during septic shock. Also involved in bacterial translocation across the host epithelial barrier by mediating cleavage and degradation of host epithelial junction proteins, such as CDH1 and OCLN. Additionally, has been involved in degradation of fibronectin and vitronectin, two host extracellular matrix proteins involved in tissue integrity. Also able to catalyze cleavage and degradation of streptococcal proteins, such as C5a peptidase, EndoS or SmeZ. Degradation of streptococcal proteins is however strictly regulated to preserve integrity of other virulence factors. The chain is Streptopain from Streptococcus pyogenes serotype M1.